Reading from the N-terminus, the 221-residue chain is Large ribosomal subunit protein bL25 (221 aa).

The interval 192–221 (APRVEKEETEEDTVAPGDVPAENSKDADEE) is disordered.

This sequence belongs to the bacterial ribosomal protein bL25 family. CTC subfamily. Part of the 50S ribosomal subunit; part of the 5S rRNA/L5/L18/L25 subcomplex. Contacts the 5S rRNA. Binds to the 5S rRNA independently of L5 and L18.

This is one of the proteins that binds to the 5S RNA in the ribosome where it forms part of the central protuberance. The sequence is that of Large ribosomal subunit protein bL25 from Idiomarina loihiensis (strain ATCC BAA-735 / DSM 15497 / L2-TR).